The following is a 288-amino-acid chain: MTKNVLSIQSHVVFGHAGNSAAVFPMRRLGVNVWPLNTVQFSNHTQYGHWTGGAIDATQMVELVDGIGAIGMLPRCDAVLSGYLGTPEQAQSVLEIVKAVKAANPRAWYFCDPVMGAVSGCKVEPGIQEFLVRTMPGVADAMAPNHTELQRLVGREIETLEEAVTACRELIARGPKLVLVKHLLDRNSPADRFNMLVVTEREAWMGQRPLYPFARQPVGVGDLTSAVFVARTLLGDSIRAAFEHTLAAVNAVVKATWQAGRYELELVAAQSEIAQPREWFDAWVGDTA.

Residues S10 and 45 to 46 (TQ) each bind substrate. ATP-binding residues include D112, A143, E148, and K181. A substrate-binding site is contributed by D222.

It belongs to the pyridoxine kinase family. PdxY subfamily. In terms of assembly, homodimer. Mg(2+) is required as a cofactor.

It catalyses the reaction pyridoxal + ATP = pyridoxal 5'-phosphate + ADP + H(+). It functions in the pathway cofactor metabolism; pyridoxal 5'-phosphate salvage; pyridoxal 5'-phosphate from pyridoxal: step 1/1. Functionally, pyridoxal kinase involved in the salvage pathway of pyridoxal 5'-phosphate (PLP). Catalyzes the phosphorylation of pyridoxal to PLP. The protein is Pyridoxal kinase PdxY of Paraburkholderia xenovorans (strain LB400).